Here is a 135-residue protein sequence, read N- to C-terminus: MADNFNFELVSPERLLLSEQVIDVVIPASEGEMTVMAHHAPTMTTIKPGVVKVHSASGKKQDYVVFGGFADILPTGCTLLAESAIPVEDLNQDELTRRINAAKAELEDAEHHEHKSRLEHFIMELTHLSGSIQKD.

This sequence belongs to the ATPase epsilon chain family. F-type ATPases have 2 components, CF(1) - the catalytic core - and CF(0) - the membrane proton channel. CF(1) has five subunits: alpha(3), beta(3), gamma(1), delta(1), epsilon(1). CF(0) has three main subunits: a, b and c.

It is found in the cell inner membrane. Functionally, produces ATP from ADP in the presence of a proton gradient across the membrane. The chain is ATP synthase epsilon chain from Rhizobium rhizogenes (strain K84 / ATCC BAA-868) (Agrobacterium radiobacter).